Consider the following 316-residue polypeptide: tRNA dimethylallyltransferase (316 aa).

17–24 is a binding site for ATP; the sequence is GPTASGKT. Substrate is bound at residue 19 to 24; that stretch reads TASGKT. 4 interaction with substrate tRNA regions span residues 42 to 45, 166 to 170, 247 to 252, and 280 to 287; these read DSAL, QRLSR, RCVGYR, and KRQITWLR.

This sequence belongs to the IPP transferase family. Monomer. The cofactor is Mg(2+).

The enzyme catalyses adenosine(37) in tRNA + dimethylallyl diphosphate = N(6)-dimethylallyladenosine(37) in tRNA + diphosphate. In terms of biological role, catalyzes the transfer of a dimethylallyl group onto the adenine at position 37 in tRNAs that read codons beginning with uridine, leading to the formation of N6-(dimethylallyl)adenosine (i(6)A). The chain is tRNA dimethylallyltransferase from Enterobacter sp. (strain 638).